A 433-amino-acid polypeptide reads, in one-letter code: Tol-Pal system protein TolB (433 aa).

The signal sequence occupies residues 1–21 (MIKRLRGLLVLLCCVAGMAMA).

The protein belongs to the TolB family. In terms of assembly, the Tol-Pal system is composed of five core proteins: the inner membrane proteins TolA, TolQ and TolR, the periplasmic protein TolB and the outer membrane protein Pal. They form a network linking the inner and outer membranes and the peptidoglycan layer.

It localises to the periplasm. Functionally, part of the Tol-Pal system, which plays a role in outer membrane invagination during cell division and is important for maintaining outer membrane integrity. This is Tol-Pal system protein TolB from Pseudomonas entomophila (strain L48).